The chain runs to 804 residues: Phenylalanine--tRNA ligase beta subunit (804 aa).

The 117-residue stretch at 39-155 (EEGLKKLVVG…ADVKPGQDVY (117 aa)) folds into the tRNA-binding domain. Residues 408-483 (REPVVVKTTV…RIYGYDNLKS (76 aa)) enclose the B5 domain. Residues D461, D467, E470, and E471 each coordinate Mg(2+). The region spanning 711–804 (PKFPAIERDL…LENDLDIKVR (94 aa)) is the FDX-ACB domain.

Belongs to the phenylalanyl-tRNA synthetase beta subunit family. Type 1 subfamily. In terms of assembly, tetramer of two alpha and two beta subunits. It depends on Mg(2+) as a cofactor.

The protein resides in the cytoplasm. It catalyses the reaction tRNA(Phe) + L-phenylalanine + ATP = L-phenylalanyl-tRNA(Phe) + AMP + diphosphate + H(+). The sequence is that of Phenylalanine--tRNA ligase beta subunit from Lactobacillus acidophilus (strain ATCC 700396 / NCK56 / N2 / NCFM).